The primary structure comprises 245 residues: Carboxy-S-adenosyl-L-methionine synthase (245 aa).

S-adenosyl-L-methionine contacts are provided by residues tyrosine 42, 67–69 (GCS), 92–93 (DN), 120–121 (DI), asparagine 135, and arginine 202.

Belongs to the class I-like SAM-binding methyltransferase superfamily. Cx-SAM synthase family. Homodimer.

It catalyses the reaction prephenate + S-adenosyl-L-methionine = carboxy-S-adenosyl-L-methionine + 3-phenylpyruvate + H2O. Catalyzes the conversion of S-adenosyl-L-methionine (SAM) to carboxy-S-adenosyl-L-methionine (Cx-SAM). This is Carboxy-S-adenosyl-L-methionine synthase from Vibrio vulnificus (strain CMCP6).